A 299-amino-acid polypeptide reads, in one-letter code: Probable lipid kinase YegS (299 aa).

The 132-residue stretch at 2–133 (ANFPASLLIL…IDMARVNDKT (132 aa)) folds into the DAGKc domain. Residues Thr40, 66-72 (GDGTINE), and Thr95 contribute to the ATP site. Mg(2+)-binding residues include Leu215, Asp218, and Leu220. The active-site Proton acceptor is Glu271.

It belongs to the diacylglycerol/lipid kinase family. YegS lipid kinase subfamily. Mg(2+) is required as a cofactor. Ca(2+) serves as cofactor.

It localises to the cytoplasm. In terms of biological role, probably phosphorylates lipids; the in vivo substrate is unknown. The protein is Probable lipid kinase YegS of Salmonella gallinarum (strain 287/91 / NCTC 13346).